The primary structure comprises 381 residues: Tryptophan--tRNA ligase (381 aa).

The 'HIGH' region motif lies at 82 to 90; it reads PSLGMHIGH. The 'KMSKS' region signature appears at 254-258; the sequence is KMSSS.

The protein belongs to the class-I aminoacyl-tRNA synthetase family.

It localises to the cytoplasm. The enzyme catalyses tRNA(Trp) + L-tryptophan + ATP = L-tryptophyl-tRNA(Trp) + AMP + diphosphate + H(+). This Sulfurisphaera tokodaii (strain DSM 16993 / JCM 10545 / NBRC 100140 / 7) (Sulfolobus tokodaii) protein is Tryptophan--tRNA ligase.